A 154-amino-acid polypeptide reads, in one-letter code: Ribosome maturation factor RimP (154 aa).

The protein belongs to the RimP family.

The protein localises to the cytoplasm. Functionally, required for maturation of 30S ribosomal subunits. This is Ribosome maturation factor RimP from Carboxydothermus hydrogenoformans (strain ATCC BAA-161 / DSM 6008 / Z-2901).